Here is a 422-residue protein sequence, read N- to C-terminus: MSRLLCPSSSTSVVRRARPTFVLGNLSIKQAQGTGASSALARRRRSTFAATADGLHVIPLEQKYPFPWLRDACRCPDCVHPSTRQKLFCTSDIPVDIQPATNGVEEVGEGVKIRWSNGHESLYDWDFLKEHSSSVSRSEANKDLPRVGWTRASIAKERDLYLEYEELKTKEGLRKAIDHTCRFGLLFIRNVPNVETSTASCSLRTLAHYFGDIRTTFYGELWDVKNVSNSRNIAYTNLGLGLHMDLLYFQHPPQFQFLHCLRNRVQGGSSIFSDALHAAETLRIQDAASYSVLTDVQVPFFYVNDGHHLYHTHPTIEVSASGDVNQINYSPPFQAPLLLDTPPAFFTALHQFSNLVNSDENTYEYTLEEGDAVLFDNRRVLHARRAFEEIPGQGVRVGEANRWLKGCYIEGDTMWDRGRMLR.

Zn(2+) is bound by residues Cys73, Cys75, Cys78, and His119. Fe cation is bound by residues His243, Asp245, and His382.

Belongs to the gamma-BBH/TMLD family. Fe(2+) serves as cofactor.

It participates in mycotoxin biosynthesis. Functionally, dioxygenase; part of the gene cluster that mediates the biosynthesis of strobilurin A, an antifungal polyketide that contains a key beta-methoxyacrylate toxophore that targets the complex III of the mitochondrial electron transport chain. Strobilurin biosynthesis begins with construction of benzoyl CoA by step-wise elimination of ammonia from phenylalanine by the phenylalanine ammonia-lyase str11, oxygenation by str8 and retro-Claisen reaction to form benzoic acid, which is activated to its CoA thiolester benzoyl CoA by the dedicated CoA ligase str10. Benzoyl CoA forms the starter unit for the highly reducing polyketide synthase stpks1 that produces the polyketide prestrobilutin A. The FAD-dependent oxygenase str9 then catalyzes the key oxidative rearrangement responsible for the creation of the beta-methoxyacrylate toxophore. Str9 performs epoxidation of the 2,3 olefin of prestrobilutin A, followed by Meinwald rearrangement to furnish the aldehyde intermediate. Rapid enolization of the aldehyde intermediate would give the beta-methoxyacrylate skeleton and methylations catalyzed by str2 and str3 complete the synthesis and lead to the production of strobilurin A. The short-chain dehydrogenase stl2 and the dehydrogenase str4 play a role in the shunt pathway leading to the production of bolineol. The cluster encodes no obvious halogenase gene that could be involved in production of strobilurin B, nor any obvious dimethylallyl-transferase that could be involved in the production of strobilurin G. It is possible that unknown proteins encoded in, or near, the cluster (such as str1 or stl1) may form new classes of halogenases or dimethylally-transferases, or that the responsible genes are located elsewhere on the genome. Similarly, proteins encoded by str5/str6 hydrolases appear to have no chemical role in the biosynthesis of strobilurin A. Finally, no obvious self-resistance gene is found within the cluster. This is Dioxygenase str8 from Strobilurus tenacellus.